Here is a 276-residue protein sequence, read N- to C-terminus: Diaminopimelate epimerase (276 aa).

Substrate contacts are provided by Asn13, Gln46, and Asn66. Cys75 (proton donor) is an active-site residue. Substrate contacts are provided by residues Gly76–Asn77, Asn159, Asn192, and Glu210–Arg211. Catalysis depends on Cys219, which acts as the Proton acceptor. Gly220–Ser221 is a binding site for substrate.

It belongs to the diaminopimelate epimerase family. In terms of assembly, homodimer.

It is found in the cytoplasm. It catalyses the reaction (2S,6S)-2,6-diaminopimelate = meso-2,6-diaminopimelate. It functions in the pathway amino-acid biosynthesis; L-lysine biosynthesis via DAP pathway; DL-2,6-diaminopimelate from LL-2,6-diaminopimelate: step 1/1. Catalyzes the stereoinversion of LL-2,6-diaminopimelate (L,L-DAP) to meso-diaminopimelate (meso-DAP), a precursor of L-lysine and an essential component of the bacterial peptidoglycan. This is Diaminopimelate epimerase from Vibrio campbellii (strain ATCC BAA-1116).